We begin with the raw amino-acid sequence, 77 residues long: Acyl carrier protein (77 aa).

Residues 2-77 form the Carrier domain; that stretch reads AEVLEKVTKI…DAVKYIEANA (76 aa). O-(pantetheine 4'-phosphoryl)serine is present on Ser37.

It belongs to the acyl carrier protein (ACP) family. Post-translationally, 4'-phosphopantetheine is transferred from CoA to a specific serine of apo-ACP by AcpS. This modification is essential for activity because fatty acids are bound in thioester linkage to the sulfhydryl of the prosthetic group.

It localises to the cytoplasm. The protein operates within lipid metabolism; fatty acid biosynthesis. In terms of biological role, carrier of the growing fatty acid chain in fatty acid biosynthesis. This chain is Acyl carrier protein, found in Listeria innocua serovar 6a (strain ATCC BAA-680 / CLIP 11262).